A 676-amino-acid polypeptide reads, in one-letter code: Forkhead box protein biniou (676 aa).

Disordered stretches follow at residues 22–50 (YHDP…GHPY), 131–160 (AHSA…SSST), 203–232 (QEQA…SRIS), 249–312 (NYSS…PEKP), and 583–651 (IQHA…AYLP). Over residues 34–48 (PHAHSHPHQHTHTGH) the composition is skewed to basic residues. Residues 133-160 (SAGSASPQSNSKTPTDLPQDLQYASSST) are compositionally biased toward polar residues. Residues 203-220 (QEQAGQQQPQQLPAQQLQ) are compositionally biased toward low complexity. Over residues 257-273 (PAKSLNGSESSPPSQNH) the composition is skewed to polar residues. Residues 311–408 (KPALSYINMI…DEGSLRRRPR (98 aa)) constitute a DNA-binding region (fork-head). Residues 583–593 (IQHAQAQAQAQ) show a composition bias toward low complexity. Over residues 594–611 (AHHHHHQHHASHPSHSHQ) the composition is skewed to basic residues. Over residues 612 to 625 (GHGSMHQNHGTSST) the composition is skewed to low complexity. Residues 637–647 (GIDHSPIDRKP) show a composition bias toward basic and acidic residues.

As to quaternary structure, binds to DNA. As to expression, in embryo, expressed in all types of visceral muscles and their progenitors (at protein level). In late stage 10 embryo, expressed in the caudal visceral mesoderm and trunk and hindgut visceral mesoderm progenitors.

The protein resides in the nucleus. In terms of biological role, component of a regulatory network controlling visceral mesoderm development and midgut morphogenesis. Transcriptional regulator involved in the activation of a large number of genes in the visceral mesoderm including betaTub60D, dpp and Hand. Binds to and regulates a number of enhancers driving expression in the visceral mesoderm in a temporally and spatially restricted manner. Also to binds to enhancers cooperatively with activators, such as bap or HLH54F, to coregulate expression of shared target genes in the visceral mesoderm. Binds to the Ndg enhancer and drives expression of Ndg in the late visceral musculature. May be involved in the transcriptional regulation of wupA in the visceral mesoderm. Plays an indirect role in the later stages of salivary gland positioning. This Drosophila melanogaster (Fruit fly) protein is Forkhead box protein biniou (bin).